A 239-amino-acid polypeptide reads, in one-letter code: Fatty acid metabolism regulator protein (239 aa).

Residues 6–74 enclose the HTH gntR-type domain; that stretch reads QSPAGFAEEY…HGKPTKVNNF (69 aa). Residues 34–53 constitute a DNA-binding region (H-T-H motif); it reads ERELSELIGVTRTTLREVLQ.

As to quaternary structure, homodimer.

The protein localises to the cytoplasm. Functionally, multifunctional regulator of fatty acid metabolism. The protein is Fatty acid metabolism regulator protein of Cronobacter sakazakii (strain ATCC BAA-894) (Enterobacter sakazakii).